Reading from the N-terminus, the 122-residue chain is High-potential iron-sulfur protein (122 aa).

An N-terminal signal peptide occupies residues 1–37 (MSDKPISKSRRDAVKVMLGTAAAIPMINLVGFGTARA). [4Fe-4S] cluster-binding residues include Cys-80, Cys-83, Cys-100, and Cys-114.

This sequence belongs to the high-potential iron-sulfur protein (HiPIP) family. As to quaternary structure, homodimer.

The protein resides in the periplasm. In terms of biological role, specific class of high-redox-potential 4Fe-4S ferredoxins. Functions in anaerobic electron transport in most purple and in some other photosynthetic bacteria and in at least one genus (Paracoccus) of halophilic, denitrifying bacteria. In Allochromatium vinosum (strain ATCC 17899 / DSM 180 / NBRC 103801 / NCIMB 10441 / D) (Chromatium vinosum), this protein is High-potential iron-sulfur protein (hip).